A 309-amino-acid polypeptide reads, in one-letter code: Pyridoxal 5'-phosphate synthase subunit PDX1.1 (309 aa).

Met-1 carries the post-translational modification N-acetylmethionine. Residue Asp-41 participates in D-ribose 5-phosphate binding. Lys-98 (schiff-base intermediate with D-ribose 5-phosphate) is an active-site residue. Gly-170 serves as a coordination point for D-ribose 5-phosphate. Arg-182 contacts D-glyceraldehyde 3-phosphate. D-ribose 5-phosphate contacts are provided by residues Gly-231 and 252–253 (GS).

It belongs to the PdxS/SNZ family. As to quaternary structure, homodimer or heterodimer with PDX1.2 or PDX1.3. Interacts with PDX2. Expressed in flowers, shoots, leaves and weakly in roots.

It is found in the cytoplasm. The enzyme catalyses aldehydo-D-ribose 5-phosphate + D-glyceraldehyde 3-phosphate + L-glutamine = pyridoxal 5'-phosphate + L-glutamate + phosphate + 3 H2O + H(+). It participates in cofactor biosynthesis; pyridoxal 5'-phosphate biosynthesis. Catalyzes the formation of pyridoxal 5'-phosphate from ribose 5-phosphate (RBP), glyceraldehyde 3-phosphate (G3P) and ammonia. The ammonia is provided by PDX2. Can also use ribulose 5-phosphate and dihydroxyacetone phosphate as substrates, resulting from enzyme-catalyzed isomerization of RBP and G3P, respectively. Also plays an indirect role in resistance to singlet oxygen-generating photosensitizers. This Arabidopsis thaliana (Mouse-ear cress) protein is Pyridoxal 5'-phosphate synthase subunit PDX1.1 (PDX11).